We begin with the raw amino-acid sequence, 356 residues long: D-alanine--D-alanine ligase (356 aa).

The 206-residue stretch at 134–339 (KQLFEHRGLP…YPELITKLIE (206 aa)) folds into the ATP-grasp domain. 167 to 222 (NDKLNYPVFVKPANLGSSVGISKCNNEAELKEGIKEAFQFDRKLVIEQGVNAREIE) lines the ATP pocket. D293, E306, and N308 together coordinate Mg(2+).

Belongs to the D-alanine--D-alanine ligase family. Requires Mg(2+) as cofactor. The cofactor is Mn(2+).

Its subcellular location is the cytoplasm. The enzyme catalyses 2 D-alanine + ATP = D-alanyl-D-alanine + ADP + phosphate + H(+). Its pathway is cell wall biogenesis; peptidoglycan biosynthesis. Its function is as follows. Cell wall formation. The chain is D-alanine--D-alanine ligase from Staphylococcus aureus (strain MSSA476).